The primary structure comprises 334 residues: Glyceraldehyde-3-phosphate dehydrogenase (334 aa).

NAD(+) contacts are provided by residues 12 to 13 (TI) and glycine 111. 140 to 142 (SCN) contributes to the D-glyceraldehyde 3-phosphate binding site. Cysteine 141 serves as the catalytic Nucleophile. Arginine 167 contacts NAD(+). 192-193 (HG) contacts D-glyceraldehyde 3-phosphate. Glutamine 298 is an NAD(+) binding site.

This sequence belongs to the glyceraldehyde-3-phosphate dehydrogenase family. Homotetramer.

Its subcellular location is the cytoplasm. It catalyses the reaction D-glyceraldehyde 3-phosphate + phosphate + NADP(+) = (2R)-3-phospho-glyceroyl phosphate + NADPH + H(+). The catalysed reaction is D-glyceraldehyde 3-phosphate + phosphate + NAD(+) = (2R)-3-phospho-glyceroyl phosphate + NADH + H(+). It participates in carbohydrate degradation; glycolysis; pyruvate from D-glyceraldehyde 3-phosphate: step 1/5. This Pyrococcus abyssi (strain GE5 / Orsay) protein is Glyceraldehyde-3-phosphate dehydrogenase (gap).